The primary structure comprises 457 residues: Siroheme synthase (457 aa).

Residues 1–204 (MDHLPIFCQL…ADEKAVNATT (204 aa)) are precorrin-2 dehydrogenase /sirohydrochlorin ferrochelatase. NAD(+) is bound by residues 22–23 (DV) and 43–44 (LT). Residue Ser128 is modified to Phosphoserine. The segment at 216–457 (GEVVLVGAGP…RDKLNWFSNH (242 aa)) is uroporphyrinogen-III C-methyltransferase. Pro225 serves as a coordination point for S-adenosyl-L-methionine. The Proton acceptor role is filled by Asp248. Lys270 functions as the Proton donor in the catalytic mechanism. Residues 301-303 (GGD), Ile306, 331-332 (TA), Met382, and Gly411 contribute to the S-adenosyl-L-methionine site.

This sequence in the N-terminal section; belongs to the precorrin-2 dehydrogenase / sirohydrochlorin ferrochelatase family. The protein in the C-terminal section; belongs to the precorrin methyltransferase family.

The enzyme catalyses uroporphyrinogen III + 2 S-adenosyl-L-methionine = precorrin-2 + 2 S-adenosyl-L-homocysteine + H(+). It catalyses the reaction precorrin-2 + NAD(+) = sirohydrochlorin + NADH + 2 H(+). The catalysed reaction is siroheme + 2 H(+) = sirohydrochlorin + Fe(2+). The protein operates within cofactor biosynthesis; adenosylcobalamin biosynthesis; precorrin-2 from uroporphyrinogen III: step 1/1. It participates in cofactor biosynthesis; adenosylcobalamin biosynthesis; sirohydrochlorin from precorrin-2: step 1/1. Its pathway is porphyrin-containing compound metabolism; siroheme biosynthesis; precorrin-2 from uroporphyrinogen III: step 1/1. It functions in the pathway porphyrin-containing compound metabolism; siroheme biosynthesis; siroheme from sirohydrochlorin: step 1/1. The protein operates within porphyrin-containing compound metabolism; siroheme biosynthesis; sirohydrochlorin from precorrin-2: step 1/1. Its function is as follows. Multifunctional enzyme that catalyzes the SAM-dependent methylations of uroporphyrinogen III at position C-2 and C-7 to form precorrin-2 via precorrin-1. Then it catalyzes the NAD-dependent ring dehydrogenation of precorrin-2 to yield sirohydrochlorin. Finally, it catalyzes the ferrochelation of sirohydrochlorin to yield siroheme. The protein is Siroheme synthase of Salmonella typhi.